A 418-amino-acid polypeptide reads, in one-letter code: Arrestin domain-containing protein 4 (418 aa).

2 short sequence motifs (PPxY motif) span residues 350-353 and 395-398; these read PPNY and PPLY.

The protein belongs to the arrestin family. In terms of assembly, interacts with ADRB2. Interacts (via PPxY motifs) with ITCH, NEDD4L and WWP2. Interacts with AVPR2. Identified in a complex containing at least ARRDC4, AVPR2 and HGS. Interacts with SLC11A2; controls the incorporation of SLC11A2 into extracellular vesicles through an ubiquitination-dependent mechanism. Interacts with TRIM65.

It localises to the early endosome. The protein resides in the cell membrane. The protein localises to the cytoplasmic vesicle. Functions as an adapter recruiting ubiquitin-protein ligases to their specific substrates. Plays a role in endocytosis of activated G protein-coupled receptors (GPCRs). Through an ubiquitination-dependent mechanism also plays a role in the incorporation of SLC11A2 into extracellular vesicles. May play a role in glucose uptake. Participates in innate immune response by promoting IFIH1/MDA5 activation through interaction with TRIM65. In Homo sapiens (Human), this protein is Arrestin domain-containing protein 4 (ARRDC4).